We begin with the raw amino-acid sequence, 382 residues long: Lipid-A-disaccharide synthase (382 aa).

This sequence belongs to the LpxB family.

It carries out the reaction a lipid X + a UDP-2-N,3-O-bis[(3R)-3-hydroxyacyl]-alpha-D-glucosamine = a lipid A disaccharide + UDP + H(+). It participates in bacterial outer membrane biogenesis; LPS lipid A biosynthesis. Its function is as follows. Condensation of UDP-2,3-diacylglucosamine and 2,3-diacylglucosamine-1-phosphate to form lipid A disaccharide, a precursor of lipid A, a phosphorylated glycolipid that anchors the lipopolysaccharide to the outer membrane of the cell. The sequence is that of Lipid-A-disaccharide synthase from Alkalilimnicola ehrlichii (strain ATCC BAA-1101 / DSM 17681 / MLHE-1).